Here is a 378-residue protein sequence, read N- to C-terminus: Zinc finger protein DPF3 (378 aa).

Lys-99 is covalently cross-linked (Glycyl lysine isopeptide (Lys-Gly) (interchain with G-Cter in SUMO2)). The interval 145 to 193 is disordered; sequence VLENDENVEEGNEEEDLEEDIPKRKNRTRGRARGSAGGRRRHDAASQED. A compositionally biased stretch (acidic residues) spans 148–163; sequence NDENVEEGNEEEDLEE. The span at 168–186 shows a compositional bias: basic residues; sequence RKNRTRGRARGSAGGRRRH. Residues 198–221 form a C2H2-type zinc finger; it reads YVCDICGKRYKNRPGLSYHYAHTH. Positions 225 to 254 are disordered; it reads EEGDEAQDQETRSPPNHRNENHRPQKGPDG. 2 consecutive PHD-type zinc fingers follow at residues 259-319 and 316-366; these read NNYC…CKSC and CKSC…CWEL. The tract at residues 317-332 is interaction with HDGFL2; sequence KSCILCGTSENDDQLL. Gly-323 carries the phosphoserine modification.

It belongs to the requiem/DPF family. As to quaternary structure, component of the BAF complex, which includes at least actin (ACTB), ARID1A, ARID1B/BAF250, SMARCA2, SMARCA4/BRG1/BAF190A, ACTL6A/BAF53, ACTL6B/BAF53B, SMARCE1/BAF57, SMARCC1/BAF155, SMARCC2/BAF170, SMARCB1/SNF5/INI1, and one or more of SMARCD1/BAF60A, SMARCD2/BAF60B, or SMARCD3/BAF60C. In muscle cells, the BAF complex also contains DPF3. Interacts with acetylated histones H3 and H4. Component of neuron-specific chromatin remodeling complex (nBAF complex) composed of at least, ARID1A/BAF250A or ARID1B/BAF250B, SMARCD1/BAF60A, SMARCD3/BAF60C, SMARCA2/BRM/BAF190B, SMARCA4/BRG1/BAF190A, SMARCB1/BAF47, SMARCC1/BAF155, SMARCE1/BAF57, SMARCC2/BAF170, DPF1/BAF45B, DPF3/BAF45C, ACTL6B/BAF53B and actin. In terms of assembly, interacts with HDGFL2, SMARCA4/BRG1/BAF190A, SMARCC1/BAF155 and SMARCD1/BAF60A. In terms of processing, phosphorylation at Ser-323 enhances its interaction with HDGFL2.

Its subcellular location is the nucleus. Its function is as follows. Belongs to the neuron-specific chromatin remodeling complex (nBAF complex). During neural development a switch from a stem/progenitor to a post-mitotic chromatin remodeling mechanism occurs as neurons exit the cell cycle and become committed to their adult state. The transition from proliferating neural stem/progenitor cells to post-mitotic neurons requires a switch in subunit composition of the npBAF and nBAF complexes. As neural progenitors exit mitosis and differentiate into neurons, npBAF complexes which contain ACTL6A/BAF53A and PHF10/BAF45A, are exchanged for homologous alternative ACTL6B/BAF53B and DPF1/BAF45B or DPF3/BAF45C subunits in neuron-specific complexes (nBAF). The npBAF complex is essential for the self-renewal/proliferative capacity of the multipotent neural stem cells. The nBAF complex along with CREST plays a role regulating the activity of genes essential for dendrite growth. Muscle-specific component of the BAF complex, a multiprotein complex involved in transcriptional activation and repression of select genes by chromatin remodeling (alteration of DNA-nucleosome topology). Specifically binds acetylated lysines on histone 3 and 4 (H3K14ac, H3K9ac, H4K5ac, H4K8ac, H4K12ac, H4K16ac). In the complex, it acts as a tissue-specific anchor between histone acetylations and methylations and chromatin remodeling. It thereby probably plays an essential role in heart and skeletal muscle development. Functionally, acts as a regulator of myogenesis in cooperation with HDGFL2. Mediates the interaction of HDGFL2 with the BAF complex. HDGFL2-DPF3a activate myogenic genes by increasing chromatin accessibility through recruitment of SMARCA4/BRG1/BAF190A (ATPase subunit of the BAF complex) to myogenic gene promoters. The protein is Zinc finger protein DPF3 (DPF3) of Homo sapiens (Human).